Here is a 180-residue protein sequence, read N- to C-terminus: UPF0743 protein C215.06c (180 aa).

2 consecutive C2HC LYAR-type zinc fingers follow at residues 1-26 (MVSF…SRCH) and 27-51 (GAYF…TSCM). Residues C6, C9, H21, C25, C32, C35, H47, and C50 each coordinate Zn(2+). Positions 61-125 (LYRPTKKELK…KETVSSPAEQ (65 aa)) are disordered. The segment covering 77–95 (NAVNSKELSPNTDNQNTPA) has biased composition (polar residues). Phosphoserine is present on S85. The span at 100–111 (HSLDENEKDKEN) shows a compositional bias: basic and acidic residues.

This sequence belongs to the UPF0743 family.

The protein resides in the nucleus. This is UPF0743 protein C215.06c from Schizosaccharomyces pombe (strain 972 / ATCC 24843) (Fission yeast).